Here is a 41-residue protein sequence, read N- to C-terminus: Large ribosomal subunit protein bL36 (41 aa).

The protein belongs to the bacterial ribosomal protein bL36 family.

This chain is Large ribosomal subunit protein bL36, found in Sinorhizobium medicae (strain WSM419) (Ensifer medicae).